An 813-amino-acid chain; its full sequence is Leucine--tRNA ligase (813 aa).

A 'HIGH' region motif is present at residues 42-52; that stretch reads PYTSGNLHIGH. Positions 580–584 match the 'KMSKS' region motif; the sequence is KMSKS. Lys583 provides a ligand contact to ATP.

The protein belongs to the class-I aminoacyl-tRNA synthetase family.

It localises to the cytoplasm. The catalysed reaction is tRNA(Leu) + L-leucine + ATP = L-leucyl-tRNA(Leu) + AMP + diphosphate. The chain is Leucine--tRNA ligase from Dehalococcoides mccartyi (strain ATCC BAA-2266 / KCTC 15142 / 195) (Dehalococcoides ethenogenes (strain 195)).